Consider the following 142-residue polypeptide: Large ribosomal subunit protein uL13 (142 aa).

Belongs to the universal ribosomal protein uL13 family. In terms of assembly, part of the 50S ribosomal subunit.

Its function is as follows. This protein is one of the early assembly proteins of the 50S ribosomal subunit, although it is not seen to bind rRNA by itself. It is important during the early stages of 50S assembly. This Haemophilus influenzae (strain PittGG) protein is Large ribosomal subunit protein uL13.